A 482-amino-acid chain; its full sequence is ATP synthase subunit beta (482 aa).

Residue 168–175 (GGAGVGKT) coordinates ATP.

The protein belongs to the ATPase alpha/beta chains family. In terms of assembly, F-type ATPases have 2 components, CF(1) - the catalytic core - and CF(0) - the membrane proton channel. CF(1) has five subunits: alpha(3), beta(3), gamma(1), delta(1), epsilon(1). CF(0) has three main subunits: a(1), b(2) and c(9-12). The alpha and beta chains form an alternating ring which encloses part of the gamma chain. CF(1) is attached to CF(0) by a central stalk formed by the gamma and epsilon chains, while a peripheral stalk is formed by the delta and b chains.

The protein resides in the cell membrane. It carries out the reaction ATP + H2O + 4 H(+)(in) = ADP + phosphate + 5 H(+)(out). Produces ATP from ADP in the presence of a proton gradient across the membrane. The catalytic sites are hosted primarily by the beta subunits. The sequence is that of ATP synthase subunit beta from Nocardia farcinica (strain IFM 10152).